Reading from the N-terminus, the 136-residue chain is Large ribosomal subunit protein uL16 (136 aa).

The protein belongs to the universal ribosomal protein uL16 family. In terms of assembly, part of the 50S ribosomal subunit.

Its function is as follows. Binds 23S rRNA and is also seen to make contacts with the A and possibly P site tRNAs. This is Large ribosomal subunit protein uL16 from Shewanella woodyi (strain ATCC 51908 / MS32).